We begin with the raw amino-acid sequence, 300 residues long: Epimerase family protein SAB0724c (300 aa).

The protein belongs to the NAD(P)-dependent epimerase/dehydratase family. SDR39U1 subfamily.

This is Epimerase family protein SAB0724c from Staphylococcus aureus (strain bovine RF122 / ET3-1).